The following is a 248-amino-acid chain: Large ribosomal subunit protein uL30B (248 aa).

The disordered stretch occupies residues 1 to 45; that stretch reads MSQKKQKIQVEQKVPENVAKKTQRDSKLRDAVAKRRTERLAANKT. A compositionally biased stretch (basic and acidic residues) spans 8 to 41; it reads IQVEQKVPENVAKKTQRDSKLRDAVAKRRTERLA.

It belongs to the universal ribosomal protein uL30 family.

Binds to G-rich structures in 28S rRNA and in mRNAs. Plays a regulatory role in the translation apparatus; inhibits cell-free translation of mRNAs. The chain is Large ribosomal subunit protein uL30B (Rpl7-2) from Paramecium tetraurelia.